A 180-amino-acid chain; its full sequence is Large ribosomal subunit protein uL6 (180 aa).

The protein belongs to the universal ribosomal protein uL6 family. As to quaternary structure, part of the 50S ribosomal subunit.

Its function is as follows. This protein binds to the 23S rRNA, and is important in its secondary structure. It is located near the subunit interface in the base of the L7/L12 stalk, and near the tRNA binding site of the peptidyltransferase center. This chain is Large ribosomal subunit protein uL6, found in Clostridium kluyveri (strain NBRC 12016).